The sequence spans 107 residues: Large ribosomal subunit protein uL24 (107 aa).

Belongs to the universal ribosomal protein uL24 family. Part of the 50S ribosomal subunit.

In terms of biological role, one of two assembly initiator proteins, it binds directly to the 5'-end of the 23S rRNA, where it nucleates assembly of the 50S subunit. Its function is as follows. One of the proteins that surrounds the polypeptide exit tunnel on the outside of the subunit. This is Large ribosomal subunit protein uL24 from Mycobacterium ulcerans (strain Agy99).